The primary structure comprises 27 residues: Delta-conotoxin TxVIB (27 aa).

Cystine bridges form between Cys2–Cys17, Cys9–Cys21, and Cys16–Cys26.

It belongs to the conotoxin O1 superfamily. In terms of tissue distribution, expressed by the venom duct.

It localises to the secreted. In terms of biological role, delta-conotoxins bind to site 6 of voltage-gated sodium channels (Nav) and inhibit the inactivation process. Induces membrane depolarization and spontaneous repetitive firing of neurons. This Conus textile (Cloth-of-gold cone) protein is Delta-conotoxin TxVIB.